Reading from the N-terminus, the 25-residue chain is Small ribosomal subunit protein eS32B (25 aa).

Residues 1 to 25 form a disordered region; sequence MRAKWRKKRTRRLKRKRRKVRARSK.

This sequence belongs to the eukaryotic ribosomal protein eS32 family. Component of the small ribosomal subunit (SSU). Mature yeast ribosomes consist of a small (40S) and a large (60S) subunit. The 40S small subunit contains 1 molecule of ribosomal RNA (18S rRNA) and 33 different proteins (encoded by 57 genes). The large 60S subunit contains 3 rRNA molecules (25S, 5.8S and 5S rRNA) and 46 different proteins (encoded by 81 genes).

The protein localises to the cytoplasm. Component of the ribosome, a large ribonucleoprotein complex responsible for the synthesis of proteins in the cell. The small ribosomal subunit (SSU) binds messenger RNAs (mRNAs) and translates the encoded message by selecting cognate aminoacyl-transfer RNA (tRNA) molecules. The large subunit (LSU) contains the ribosomal catalytic site termed the peptidyl transferase center (PTC), which catalyzes the formation of peptide bonds, thereby polymerizing the amino acids delivered by tRNAs into a polypeptide chain. The nascent polypeptides leave the ribosome through a tunnel in the LSU and interact with protein factors that function in enzymatic processing, targeting, and the membrane insertion of nascent chains at the exit of the ribosomal tunnel. The chain is Small ribosomal subunit protein eS32B from Saccharomyces cerevisiae (strain ATCC 204508 / S288c) (Baker's yeast).